The sequence spans 501 residues: Ribose import ATP-binding protein RbsA (501 aa).

2 consecutive ABC transporter domains span residues Leu-5 to Lys-241 and Ala-252 to Leu-495. Gly-37–Ser-44 is an ATP binding site.

It belongs to the ABC transporter superfamily. Ribose importer (TC 3.A.1.2.1) family. In terms of assembly, the complex is composed of an ATP-binding protein (RbsA), two transmembrane proteins (RbsC) and a solute-binding protein (RbsB).

The protein resides in the cell inner membrane. The enzyme catalyses D-ribose(out) + ATP + H2O = D-ribose(in) + ADP + phosphate + H(+). Its function is as follows. Part of the ABC transporter complex RbsABC involved in ribose import. Responsible for energy coupling to the transport system. In Salmonella typhi, this protein is Ribose import ATP-binding protein RbsA.